A 123-amino-acid chain; its full sequence is Large ribosomal subunit protein bL12 (123 aa).

This sequence belongs to the bacterial ribosomal protein bL12 family. As to quaternary structure, homodimer. Part of the ribosomal stalk of the 50S ribosomal subunit. Forms a multimeric L10(L12)X complex, where L10 forms an elongated spine to which 2 to 4 L12 dimers bind in a sequential fashion. Binds GTP-bound translation factors.

In terms of biological role, forms part of the ribosomal stalk which helps the ribosome interact with GTP-bound translation factors. Is thus essential for accurate translation. This chain is Large ribosomal subunit protein bL12, found in Marinomonas sp. (strain MWYL1).